Here is a 450-residue protein sequence, read N- to C-terminus: Bifunctional protein GlmU (450 aa).

Residues 1-229 (MRRHAIILAA…VEEIMGVNDR (229 aa)) form a pyrophosphorylase region. UDP-N-acetyl-alpha-D-glucosamine-binding positions include 8–11 (LAAG), Lys-22, Gln-72, and 77–78 (GT). A Mg(2+)-binding site is contributed by Asp-102. UDP-N-acetyl-alpha-D-glucosamine is bound by residues Gly-139, Glu-154, and Asn-227. Position 227 (Asn-227) interacts with Mg(2+). Positions 230–250 (VMLSQAEKAMQRRTNHYHMLN) are linker. An N-acetyltransferase region spans residues 251-450 (GVTIIDPDST…RQTTKEGYRK (200 aa)). The UDP-N-acetyl-alpha-D-glucosamine site is built by Arg-332 and Lys-350. His-362 serves as the catalytic Proton acceptor. Residues Tyr-365 and Asn-376 each contribute to the UDP-N-acetyl-alpha-D-glucosamine site. Residues 385–386 (NY), Ala-422, and Arg-439 each bind acetyl-CoA.

This sequence in the N-terminal section; belongs to the N-acetylglucosamine-1-phosphate uridyltransferase family. In the C-terminal section; belongs to the transferase hexapeptide repeat family. Homotrimer. Mg(2+) is required as a cofactor.

The protein resides in the cytoplasm. It carries out the reaction alpha-D-glucosamine 1-phosphate + acetyl-CoA = N-acetyl-alpha-D-glucosamine 1-phosphate + CoA + H(+). The catalysed reaction is N-acetyl-alpha-D-glucosamine 1-phosphate + UTP + H(+) = UDP-N-acetyl-alpha-D-glucosamine + diphosphate. The protein operates within nucleotide-sugar biosynthesis; UDP-N-acetyl-alpha-D-glucosamine biosynthesis; N-acetyl-alpha-D-glucosamine 1-phosphate from alpha-D-glucosamine 6-phosphate (route II): step 2/2. It participates in nucleotide-sugar biosynthesis; UDP-N-acetyl-alpha-D-glucosamine biosynthesis; UDP-N-acetyl-alpha-D-glucosamine from N-acetyl-alpha-D-glucosamine 1-phosphate: step 1/1. It functions in the pathway bacterial outer membrane biogenesis; LPS lipid A biosynthesis. Catalyzes the last two sequential reactions in the de novo biosynthetic pathway for UDP-N-acetylglucosamine (UDP-GlcNAc). The C-terminal domain catalyzes the transfer of acetyl group from acetyl coenzyme A to glucosamine-1-phosphate (GlcN-1-P) to produce N-acetylglucosamine-1-phosphate (GlcNAc-1-P), which is converted into UDP-GlcNAc by the transfer of uridine 5-monophosphate (from uridine 5-triphosphate), a reaction catalyzed by the N-terminal domain. In Staphylococcus aureus (strain USA300), this protein is Bifunctional protein GlmU.